We begin with the raw amino-acid sequence, 297 residues long: F-box only protein 2 (297 aa).

The interval 1–42 is disordered; sequence MDGDGDPESVGQPEEASPEEQQEEACAEEANGGEERPEDDGE. Residues 16–27 show a composition bias toward acidic residues; it reads ASPEEQQEEACA. Positions 45 to 92 constitute an F-box domain; the sequence is AAYLDELPEPLLLRVLAELPAAQLVQACRLVCLRWKELVDGAPLWLLK. The FBA domain maps to 114–297; sequence FYFLSKRRRN…VTNSSVWVEP (184 aa). Residues 211–213 and 279–280 contribute to the a carbohydrate site; these read RRD and YW.

As to quaternary structure, component of the SCF(FBXO2) complex consisting of CUL1, RBX1, SKP1 and FBXO2. Predominantly detected as heterodimer with SKP1; the heterodimer with SKP1 is not part of the SCF(FBXO2) complex.

The protein resides in the cytoplasm. It localises to the microsome membrane. Its pathway is protein modification; protein ubiquitination. Functionally, substrate recognition component of a SCF (SKP1-CUL1-F-box protein) E3 ubiquitin-protein ligase complex that mediates the ubiquitination and subsequent proteasomal degradation of target proteins. Involved in the endoplasmic reticulum-associated degradation pathway (ERAD) for misfolded lumenal proteins by recognizing and binding sugar chains on unfolded glycoproteins that are retrotranslocated into the cytosol and promoting their ubiquitination and subsequent degradation. Prevents formation of cytosolic aggregates of unfolded glycoproteins that have been retrotranslocated into the cytosol. Able to recognize and bind denatured glycoproteins, preferentially those of the high-mannose type. The chain is F-box only protein 2 (FBXO2) from Bos taurus (Bovine).